The primary structure comprises 948 residues: Protocadherin alpha-10 (948 aa).

A signal peptide spans 1-28 (MVSRCSCLGVQCLLLSLLLLAAWEVGSG). 6 Cadherin domains span residues 29–132 (QLHY…PPRF), 133–241 (SVTE…APIF), 242–349 (DRPV…SPEV), 350–454 (IVTS…APAF), 455–564 (AQPE…APAL), and 587–689 (GHVV…APEV). The Extracellular portion of the chain corresponds to 29-695 (QLHYSVYEEA…APEVALVDVN (667 aa)). N-linked (GlcNAc...) asparagine glycosylation is found at N256 and N264. N-linked (GlcNAc...) asparagine glycosylation is present at N547. The chain crosses the membrane as a helical span at residues 696 to 716 (VYLIIAICAVSSLLVLTLLLY). At 717-948 (TALRCSAAPT…GNSTTDNSDQ (232 aa)) the chain is on the cytoplasmic side. 6 PXXP repeats span residues 732 to 735 (PVKP), 772 to 775 (PSLP), 797 to 800 (PRQP), 830 to 833 (PGGP), 871 to 874 (PGNP), and 889 to 892 (PGSP). The tract at residues 732 to 892 (PVKPTLVCSS…PDKFIIPGSP (161 aa)) is 6 X 4 AA repeats of P-X-X-P. Disordered regions lie at residues 783–804 (DGED…NPDW) and 827–948 (RAGP…NSDQ). The segment covering 907-921 (DKSDFITFGKKEETK) has biased composition (basic and acidic residues).

It localises to the cell membrane. Potential calcium-dependent cell-adhesion protein. May be involved in the establishment and maintenance of specific neuronal connections in the brain. This chain is Protocadherin alpha-10 (PCDHA10), found in Pan troglodytes (Chimpanzee).